An 84-amino-acid chain; its full sequence is Large ribosomal subunit protein bL27c (84 aa).

The disordered stretch occupies residues 1–23 (MAHKKGAGSTKNGRDSNAKRLGV).

Belongs to the bacterial ribosomal protein bL27 family.

It is found in the plastid. The protein localises to the chloroplast. This chain is Large ribosomal subunit protein bL27c, found in Thalassiosira pseudonana (Marine diatom).